Consider the following 205-residue polypeptide: Probable DNA-binding protein (205 aa).

The tract at residues 140–168 (GEGDGAPRPACPDFSTRGAETGNQGVQPG) is disordered.

The chain is Probable DNA-binding protein from Homo sapiens (Human).